The following is a 119-amino-acid chain: Large ribosomal subunit protein bL20 (119 aa).

This sequence belongs to the bacterial ribosomal protein bL20 family.

Binds directly to 23S ribosomal RNA and is necessary for the in vitro assembly process of the 50S ribosomal subunit. It is not involved in the protein synthesizing functions of that subunit. The polypeptide is Large ribosomal subunit protein bL20 (Streptococcus pyogenes serotype M1).